A 147-amino-acid chain; its full sequence is UPF0178 protein VS_2364 (147 aa).

It belongs to the UPF0178 family.

In Vibrio atlanticus (strain LGP32) (Vibrio splendidus (strain Mel32)), this protein is UPF0178 protein VS_2364.